A 381-amino-acid chain; its full sequence is Cell division protein FtsZ (381 aa).

Residues 1–25 (MKFINDAIKESEKREKPSSSSMNSE) are disordered. Over residues 7-17 (AIKESEKREKP) the composition is skewed to basic and acidic residues. Residues 48-52 (GAGNN), 135-137 (GTG), Glu-166, Arg-170, and Asp-213 each bind GTP.

It belongs to the FtsZ family. As to quaternary structure, homodimer. Polymerizes to form a dynamic ring structure in a strictly GTP-dependent manner. Interacts directly with several other division proteins.

Its subcellular location is the cytoplasm. Functionally, essential cell division protein that forms a contractile ring structure (Z ring) at the future cell division site. The regulation of the ring assembly controls the timing and the location of cell division. One of the functions of the FtsZ ring is to recruit other cell division proteins to the septum to produce a new cell wall between the dividing cells. Binds GTP and shows GTPase activity. This Methanothermobacter thermautotrophicus (strain ATCC 29096 / DSM 1053 / JCM 10044 / NBRC 100330 / Delta H) (Methanobacterium thermoautotrophicum) protein is Cell division protein FtsZ.